The primary structure comprises 644 residues: MSRQFSSRSGYRSGGGFSSGSAGIINYQRRTTSSSTRRSGGGGGRFSSCGGGGGSFGAGGGFGSRSLVNLGGSKSISISVARGGGRGSGFGGGYGGGGFGGGGFGGGGFGGGGIGGGGFGGFGSGGGGFGGGGFGGGGYGGGYGPVCPPGGIQEVTINQSLLQPLNVEIDPEIQKVKSREREQIKSLNNQFASFIDKVRFLEQQNQVLQTKWELLQQVDTSTRTHNLEPYFESFINNLRRRVDQLKSDQSRLDSELKNMQDMVEDYRNKYEDEINKRTNAENEFVTIKKDVDGAYMTKVDLQAKLDNLQQEIDFLTALYQAELSQMQTQISETNVILSMDNNRSLDLDSIIAEVKAQYEDIAQKSKAEAESLYQSKYEELQITAGRHGDSVRNSKIEISELNRVIQRLRSEIDNVKKQISNLQQSISDAEQRGENALKDAKNKLNDLEDALQQAKEDLARLLRDYQELMNTKLALDLEIATYRTLLEGEESRMSGECAPNVSVSVSTSHTTISGGGSRGGGGGGYGSGGSSYGSGGGSYGSGGGGGGGRGSYGSGGSSYGSGGGSYGSGGGGGGHGSYGSGSSSGGYRGGSGGGGGGSSGGRGSGGGSSGGSIGGRGSSSGGVKSSGGSSSVKFVSTTYSGVTR.

A head region spans residues 2-179 (SRQFSSRSGY…DPEIQKVKSR (178 aa)). Arg12 is modified (omega-N-methylarginine). Residues Ser18 and Ser21 each carry the phosphoserine modification. Residues 22–38 (AGIINYQRRTTSSSTRR) show a composition bias toward low complexity. The interval 22–47 (AGIINYQRRTTSSSTRRSGGGGGRFS) is disordered. Arg45 bears the Omega-N-methylarginine mark. Phosphoserine is present on Ser66. Position 82 is an omega-N-methylarginine (Arg82). Residues 180-215 (EREQIKSLNNQFASFIDKVRFLEQQNQVLQTKWELL) are coil 1A. Positions 180–493 (EREQIKSLNN…TLLEGEESRM (314 aa)) constitute an IF rod domain. A linker 1 region spans residues 216–234 (QQVDTSTRTHNLEPYFESF). Residues 235–326 (INNLRRRVDQ…ALYQAELSQM (92 aa)) form a coil 1B region. Residue Lys276 is modified to N6,N6-dimethyllysine. The tract at residues 327-350 (QTQISETNVILSMDNNRSLDLDSI) is linker 12. Ser344 carries the phosphoserine modification. Residues 351–489 (IAEVKAQYED…ATYRTLLEGE (139 aa)) are coil 2. 2 disordered regions span residues 489-523 (EESR…GGGG) and 568-644 (SGGG…GVTR). The tail stretch occupies residues 490-644 (ESRMSGECAP…VSTTYSGVTR (155 aa)). The span at 501–511 (VSVSVSTSHTT) shows a compositional bias: low complexity. 2 stretches are compositionally biased toward gly residues: residues 513 to 523 (SGGGSRGGGGG) and 568 to 620 (SGGG…GSSS). Arg518 and Arg588 each carry omega-N-methylarginine. Residues 621-631 (GGVKSSGGSSS) are compositionally biased toward low complexity. Residues 632–644 (VKFVSTTYSGVTR) show a composition bias toward polar residues.

It belongs to the intermediate filament family. Heterotetramer of two type I and two type II keratins. Heterodimer with KRT10. Two heterodimers of KRT1 and KRT10 form a heterotetramer. Forms a heterodimer with KRT14; the interaction is more abundant in the absence of KRT5. Interacts with PLEC isoform 1C, when in a heterodimer with KRT10. Interacts with ITGB1 in the presence of RACK1 and SRC, and with RACK1. Interacts with C1QBP; the association represents a cell surface kininogen receptor. Interacts with EPPK1; interaction is dependent of higher-order structure of intermediate filament. Post-translationally, undergoes deimination of some arginine residues (citrullination). The source of this protein is neonatal foreskin. The 67-kDa type II keratins are expressed in terminally differentiating epidermis.

The protein resides in the cell membrane. It localises to the cytoplasm. In terms of biological role, may regulate the activity of kinases such as PKC and SRC via binding to integrin beta-1 (ITB1) and the receptor of activated protein C kinase 1 (RACK1). In complex with C1QBP is a high affinity receptor for kininogen-1/HMWK. This Homo sapiens (Human) protein is Keratin, type II cytoskeletal 1 (KRT1).